The primary structure comprises 460 residues: Chromosomal replication initiator protein DnaA 2 (460 aa).

Residues 1–68 are domain I, interacts with DnaA modulators; sequence MRAWEDFLLL…KTSLVNNNGK (68 aa). The segment at 68-102 is domain II; sequence KLIRVHITSLDKTAPFYKEKQIQQEKTAYFTMQYG. The segment at 103 to 321 is domain III, AAA+ region; the sequence is NVNPEMTFGN…DALKLLSKRV (219 aa). ATP is bound by residues G151, G153, K154, and T155. Residues 322–460 are domain IV, binds dsDNA; sequence AYKKLAQQLL…EFFPEEEISC (139 aa).

It belongs to the DnaA family. Oligomerizes as a right-handed, spiral filament on DNA at oriC.

The protein resides in the cytoplasm. Functionally, plays an essential role in the initiation and regulation of chromosomal replication. ATP-DnaA binds to the origin of replication (oriC) to initiate formation of the DNA replication initiation complex once per cell cycle. Binds the DnaA box (a 9 base pair repeat at the origin) and separates the double-stranded (ds)DNA. Forms a right-handed helical filament on oriC DNA; dsDNA binds to the exterior of the filament while single-stranded (ss)DNA is stabiized in the filament's interior. The ATP-DnaA-oriC complex binds and stabilizes one strand of the AT-rich DNA unwinding element (DUE), permitting loading of DNA polymerase. After initiation quickly degrades to an ADP-DnaA complex that is not apt for DNA replication. Binds acidic phospholipids. In Chlamydia caviae (strain ATCC VR-813 / DSM 19441 / 03DC25 / GPIC) (Chlamydophila caviae), this protein is Chromosomal replication initiator protein DnaA 2.